Consider the following 367-residue polypeptide: Glutamate 5-kinase (367 aa).

Lysine 10 is an ATP binding site. Positions 50, 137, and 149 each coordinate substrate. Residues 169–170 (TD) and 211–217 (TGGMSTK) each bind ATP. The region spanning 275-353 (AGEITVDDGA…QQIAEILGYE (79 aa)) is the PUA domain.

It belongs to the glutamate 5-kinase family.

The protein resides in the cytoplasm. The enzyme catalyses L-glutamate + ATP = L-glutamyl 5-phosphate + ADP. It functions in the pathway amino-acid biosynthesis; L-proline biosynthesis; L-glutamate 5-semialdehyde from L-glutamate: step 1/2. In terms of biological role, catalyzes the transfer of a phosphate group to glutamate to form L-glutamate 5-phosphate. The polypeptide is Glutamate 5-kinase (Pectobacterium carotovorum subsp. carotovorum (strain PC1)).